A 45-amino-acid polypeptide reads, in one-letter code: uncharacterized protein (45 aa).

Residues E15 to I37 form a helical membrane-spanning segment.

Its subcellular location is the membrane. This is an uncharacterized protein from Archaeoglobus fulgidus (strain ATCC 49558 / DSM 4304 / JCM 9628 / NBRC 100126 / VC-16).